We begin with the raw amino-acid sequence, 672 residues long: Acetyl-coenzyme A synthetase (672 aa).

Residues arginine 205–lysine 208 and threonine 325 contribute to the CoA site. ATP-binding positions include glycine 401–proline 403, aspartate 425–threonine 430, aspartate 516, and arginine 531. Serine 539 is a binding site for CoA. Arginine 542 is a binding site for ATP. CoA is bound at residue arginine 600.

This sequence belongs to the ATP-dependent AMP-binding enzyme family.

It catalyses the reaction acetate + ATP + CoA = acetyl-CoA + AMP + diphosphate. The protein is Acetyl-coenzyme A synthetase (facA) of Phycomyces blakesleeanus (strain ATCC 8743b / DSM 1359 / FGSC 10004 / NBRC 33097 / NRRL 1555).